Reading from the N-terminus, the 145-residue chain is Ribonuclease P protein component (145 aa).

Residues 120–130 (LPAAPGTMPPA) are compositionally biased toward low complexity. Positions 120-145 (LPAAPGTMPPARTMHPSSLSPTEPDL) are disordered. The segment covering 134-145 (HPSSLSPTEPDL) has biased composition (polar residues).

This sequence belongs to the RnpA family. Consists of a catalytic RNA component (M1 or rnpB) and a protein subunit.

It carries out the reaction Endonucleolytic cleavage of RNA, removing 5'-extranucleotides from tRNA precursor.. Functionally, RNaseP catalyzes the removal of the 5'-leader sequence from pre-tRNA to produce the mature 5'-terminus. It can also cleave other RNA substrates such as 4.5S RNA. The protein component plays an auxiliary but essential role in vivo by binding to the 5'-leader sequence and broadening the substrate specificity of the ribozyme. This chain is Ribonuclease P protein component, found in Xanthomonas oryzae pv. oryzae (strain MAFF 311018).